Consider the following 4116-residue polypeptide: Dynein axonemal heavy chain 3 (4116 aa).

Disordered stretches follow at residues 1–68 (MGAT…ANEE) and 137–172 (VPRD…KEDS). The interval 1 to 1390 (MGATGRLELT…QVQIITTEAL (1390 aa)) is stem. A compositionally biased stretch (polar residues) spans 145–156 (GLPSSGNRSSSE). Residues 785–852 (DLIKRCSEFE…NKEEELLEKE (68 aa)) adopt a coiled-coil conformation. 4 AAA regions span residues 1391-1612 (YGYE…VLTA), 1672-1903 (KVLN…LHCK), 2036-2284 (KVPA…VIQG), and 2395-2646 (EFNN…LRRH). Residues 1429 to 1436 (GPAGTGKT), 1710 to 1717 (GDPMGGKT), 2074 to 2081 (GPTGTGKS), and 2434 to 2441 (GIGGSGRQ) contribute to the ATP site. A stalk region spans residues 2661-2960 (FKTLLNSKRQ…KDLEENIEIC (300 aa)). AAA regions lie at residues 3045–3275 (LGDP…EISE) and 3488–3712 (VREF…QIQM).

It belongs to the dynein heavy chain family. As to quaternary structure, consists of at least two heavy chains and a number of intermediate and light chains. In terms of tissue distribution, expressed primarily in trachea and testis, 2 tissues containing axonemal structures. Also expressed in lung.

Its subcellular location is the cytoplasm. It localises to the cytoskeleton. The protein resides in the cilium axoneme. Functionally, force generating protein of respiratory cilia. Produces force towards the minus ends of microtubules. Dynein has ATPase activity; the force-producing power stroke is thought to occur on release of ADP. Involved in sperm motility; implicated in sperm flagellar assembly. The sequence is that of Dynein axonemal heavy chain 3 (DNAH3) from Homo sapiens (Human).